A 418-amino-acid chain; its full sequence is Sterigmatocystin 8-O-methyltransferase (418 aa).

Residues 1 to 41 (MTLPNKAALVGLAHTLSEQVKRYLVTADETKSPEDHKLCIE) constitute a propeptide that is removed on maturation. Residue 170 to 176 (MRSAAYF) coordinates substrate. Positions 206 to 225 (LFDYYSTVDEVRGRRFDLGM) are substrate binding. S-adenosyl-L-methionine is bound by residues 254 to 255 (GG), aspartate 277, 297 to 298 (DI), and arginine 313. The Proton acceptor role is filled by histidine 317.

It belongs to the class I-like SAM-binding methyltransferase superfamily. Cation-independent O-methyltransferase family. COMT subfamily.

The enzyme catalyses sterigmatocystin + S-adenosyl-L-methionine = 8-O-methylsterigmatocystin + S-adenosyl-L-homocysteine + H(+). The catalysed reaction is dihydrosterigmatocystin + S-adenosyl-L-methionine = 8-O-methyldihydrosterigmatocystin + S-adenosyl-L-homocysteine + H(+). It participates in mycotoxin biosynthesis; aflatoxin biosynthesis. Involved in the conversion of sterigmatocystin to O-methylsterigmatocystin (OMST) and dihydrosterigmatocystin to dihydro-o-methylsterigmatocystin in the aflatoxin biosynthesis pathway. This Aspergillus flavus (strain ATCC 200026 / FGSC A1120 / IAM 13836 / NRRL 3357 / JCM 12722 / SRRC 167) protein is Sterigmatocystin 8-O-methyltransferase (omtA).